A 626-amino-acid chain; its full sequence is Mitogen-activated protein kinase kinase kinase 3 (626 aa).

The region spanning 44–123 (DVRIKFEHNG…KSLRILLLSQ (80 aa)) is the PB1 domain. 3 stretches are compositionally biased toward polar residues: residues 146 to 155 (QSAGDINTIY), 165 to 174 (LSVSSQNPGR), and 219 to 232 (SAEN…QSLD). 2 disordered regions span residues 146–184 (QSAG…YVPE) and 218–262 (SSAE…SDRE). Phosphoserine is present on Ser147. Ser166 bears the Phosphoserine; by SGK1 mark. 2 positions are modified to phosphoserine: Ser250 and Ser312. At Ser337 the chain carries Phosphoserine; by SGK1. Position 340 is a phosphoserine (Ser340). In terms of domain architecture, Protein kinase spans 362-622 (WRRGKLLGQG…AEELLTHHFA (261 aa)). ATP-binding positions include 368 to 376 (LGQGAFGRV) and Lys391. Asp489 acts as the Proton acceptor in catalysis.

It belongs to the protein kinase superfamily. STE Ser/Thr protein kinase family. MAP kinase kinase kinase subfamily. As to quaternary structure, binds both upstream activators and downstream substrates in multimolecular complexes. Part of a complex with MAP2K3, RAC1 and CCM2. Interacts with MAP2K5 and SPAG9. Mg(2+) is required as a cofactor. Post-translationally, phosphorylation at Ser-166 and Ser-337 by SGK1 inhibits its activity.

It carries out the reaction L-seryl-[protein] + ATP = O-phospho-L-seryl-[protein] + ADP + H(+). The enzyme catalyses L-threonyl-[protein] + ATP = O-phospho-L-threonyl-[protein] + ADP + H(+). With respect to regulation, activated by phosphorylation on Thr-530. Functionally, component of a protein kinase signal transduction cascade. Mediates activation of the NF-kappa-B, AP1 and DDIT3 transcriptional regulators. The sequence is that of Mitogen-activated protein kinase kinase kinase 3 (MAP3K3) from Homo sapiens (Human).